The sequence spans 216 residues: N-glycosylase/DNA lyase (216 aa).

8-oxoguanine contacts are provided by glutamine 27, serine 48, and tryptophan 59. Residues 106-170 are helix-hairpin-helix; that stretch reads EHYYENMVAL…LDYRLKKINP (65 aa). Lysine 130 acts as the Schiff-base intermediate with DNA in catalysis. Positions 134 and 160 each coordinate 8-oxoguanine. Residue aspartate 162 is part of the active site. 8-oxoguanine is bound by residues aspartate 190 and tryptophan 194.

It belongs to the archaeal N-glycosylase/DNA lyase (AGOG) family.

It carries out the reaction 2'-deoxyribonucleotide-(2'-deoxyribose 5'-phosphate)-2'-deoxyribonucleotide-DNA = a 3'-end 2'-deoxyribonucleotide-(2,3-dehydro-2,3-deoxyribose 5'-phosphate)-DNA + a 5'-end 5'-phospho-2'-deoxyribonucleoside-DNA + H(+). Functionally, DNA repair enzyme that is part of the base excision repair (BER) pathway; protects from oxidative damage by removing the major product of DNA oxidation, 8-oxoguanine (GO), from single- and double-stranded DNA substrates. The chain is N-glycosylase/DNA lyase from Nanoarchaeum equitans (strain Kin4-M).